Consider the following 456-residue polypeptide: Multidrug resistance protein NorM (456 aa).

A run of 12 helical transmembrane segments spans residues 11–31 (LIKL…MGFV), 53–73 (IWLP…PVVA), 92–112 (VVLA…TQFI), 126–146 (TVGY…FQTL), 159–179 (AMVI…IFVY), 189–209 (GVGC…LLLA), 242–262 (FPVA…ALLV), 268–288 (IIVA…MLPM), 314–334 (SRVG…ITVL), 356–376 (LLLF…AAGA), 385–405 (AIFN…GYIL), and 417–437 (AQGF…MLGV).

It belongs to the multi antimicrobial extrusion (MATE) (TC 2.A.66.1) family.

It is found in the cell inner membrane. Multidrug efflux pump that functions as a Na(+)/drug antiporter. Confers resistance to several drugs, such as norfloxacin, ciprofloxacin, ethidium, kanamycin and streptomycin. The sequence is that of Multidrug resistance protein NorM (norM) from Vibrio parahaemolyticus serotype O3:K6 (strain RIMD 2210633).